Consider the following 465-residue polypeptide: UDP-N-acetylmuramate--L-alanine ligase (465 aa).

115–121 (GAHGKTT) serves as a coordination point for ATP.

This sequence belongs to the MurCDEF family.

The protein localises to the cytoplasm. It catalyses the reaction UDP-N-acetyl-alpha-D-muramate + L-alanine + ATP = UDP-N-acetyl-alpha-D-muramoyl-L-alanine + ADP + phosphate + H(+). It participates in cell wall biogenesis; peptidoglycan biosynthesis. In terms of biological role, cell wall formation. The polypeptide is UDP-N-acetylmuramate--L-alanine ligase (Coxiella burnetii (strain Dugway 5J108-111)).